Consider the following 133-residue polypeptide: Ribosome-binding factor A (133 aa).

Belongs to the RbfA family. Monomer. Binds 30S ribosomal subunits, but not 50S ribosomal subunits or 70S ribosomes.

Its subcellular location is the cytoplasm. One of several proteins that assist in the late maturation steps of the functional core of the 30S ribosomal subunit. Associates with free 30S ribosomal subunits (but not with 30S subunits that are part of 70S ribosomes or polysomes). Required for efficient processing of 16S rRNA. May interact with the 5'-terminal helix region of 16S rRNA. This Bordetella bronchiseptica (strain ATCC BAA-588 / NCTC 13252 / RB50) (Alcaligenes bronchisepticus) protein is Ribosome-binding factor A.